Here is a 607-residue protein sequence, read N- to C-terminus: Guanine nucleotide-binding protein-like 1 (607 aa).

Positions 1 to 14 (MPRKKPFSVKQKKK) are enriched in basic residues. The tract at residues 1–81 (MPRKKPFSVK…GPRGYDPNRY (81 aa)) is disordered. Residues 15 to 26 (QLQDKRERKRGL) show a composition bias toward basic and acidic residues. Phosphoserine is present on residues Ser-32, Ser-33, and Ser-34. Residues Thr-48 and Thr-50 each carry the phosphothreonine modification. A phosphoserine mark is found at Ser-51 and Ser-68. Positions 178–418 (WRQLWRVLEM…LCDCPGLIFP (241 aa)) constitute a CP-type G domain. Position 225–228 (225–228 (NKVD)) interacts with GTP. Ser-324 is subject to Phosphoserine. Residues 367–374 (GFPNVGKS) and 411–415 (DCPGL) contribute to the GTP site. Residues 547-607 (GPAGDEEEEE…PYALLGEDEC (61 aa)) are disordered. A compositionally biased stretch (acidic residues) spans 550-584 (GDEEEEEEEELSSSCEEEGEEDRDADEEGEGDEDT). Ser-561, Ser-562, and Ser-563 each carry phosphoserine.

It belongs to the TRAFAC class YlqF/YawG GTPase family.

In terms of biological role, possible regulatory or functional link with the histocompatibility cluster. This is Guanine nucleotide-binding protein-like 1 (GNL1) from Pongo abelii (Sumatran orangutan).